Reading from the N-terminus, the 148-residue chain is Protein-arginine-phosphatase (148 aa).

The active-site Nucleophile is the C9. 10–15 (TGNTCR) provides a ligand contact to substrate. Residue R15 is part of the active site. Residue D117 is the Proton donor of the active site.

Belongs to the low molecular weight phosphotyrosine protein phosphatase family. In terms of assembly, is present in solution as a mixture of monomers, dimers and higher order oligomers (trimers and tetramers).

It catalyses the reaction N(omega)-phospho-L-arginyl-[protein] + H2O = L-arginyl-[protein] + phosphate. With respect to regulation, irreversibly inhibited by the synthetic inhibitor cyc-SeCN-amidine, which inactivates the enzyme by inducing disulfide bond formation between the two active site cysteine residues Cys-9 and Cys-14. Functionally, catalyzes the specific dephosphorylation of phosphoarginine residues in proteins. Probably counteracts the protein arginine kinase McsB in vivo. Exhibits almost no activity against pTyr peptides. Protein arginine phosphorylation has a physiologically important role and is involved in the regulation of many critical cellular processes, such as protein homeostasis, motility, competence, and stringent and stress responses, by regulating gene expression and protein activity. In Geobacillus stearothermophilus (Bacillus stearothermophilus), this protein is Protein-arginine-phosphatase (ywle).